We begin with the raw amino-acid sequence, 144 residues long: Large-conductance mechanosensitive channel (144 aa).

Transmembrane regions (helical) follow at residues 16-36 (VIDL…VDSV) and 86-106 (GNFL…FLMV).

It belongs to the MscL family. As to quaternary structure, homopentamer.

Its subcellular location is the cell inner membrane. Channel that opens in response to stretch forces in the membrane lipid bilayer. May participate in the regulation of osmotic pressure changes within the cell. The polypeptide is Large-conductance mechanosensitive channel (Cupriavidus pinatubonensis (strain JMP 134 / LMG 1197) (Cupriavidus necator (strain JMP 134))).